The primary structure comprises 398 residues: Delta-aminolevulinic acid dehydratase, chloroplastic (398 aa).

Positions 48–87 (VPEAPPVPPTPASPAGTPVVPSLPIQRRPRRNRRSPALRS) are disordered. A compositionally biased stretch (pro residues) spans 50 to 59 (EAPPVPPTPA). Low complexity predominate over residues 60-69 (SPAGTPVVPS). The span at 74–83 (RRPRRNRRSP) shows a compositional bias: basic residues. Lys266 acts as the Schiff-base intermediate with substrate in catalysis. 2 residues coordinate 5-aminolevulinate: Arg276 and Lys288. Glu304 is a binding site for Mg(2+). Lys319 acts as the Schiff-base intermediate with substrate in catalysis. Ser345 and Tyr384 together coordinate 5-aminolevulinate.

The protein belongs to the ALAD family. Homooctamer; formed by oligomerization of dimers. Probably also forms lower oligomers. Mg(2+) is required as a cofactor.

The protein resides in the plastid. The protein localises to the chloroplast. It catalyses the reaction 2 5-aminolevulinate = porphobilinogen + 2 H2O + H(+). The protein operates within porphyrin-containing compound metabolism; protoporphyrin-IX biosynthesis; coproporphyrinogen-III from 5-aminolevulinate: step 1/4. Its activity is regulated as follows. Activated by magnesium. Inhibited by succinyl acetone. Enzyme activity may depend on the oligomerization state, where the fully active octamer may dissociate and reassemble into less active lower oligomers. Its function is as follows. Catalyzes an early step in the biosynthesis of tetrapyrroles. Binds two molecules of 5-aminolevulinate per subunit, each at a distinct site, and catalyzes their condensation to form porphobilinogen. The polypeptide is Delta-aminolevulinic acid dehydratase, chloroplastic (HEMB) (Pisum sativum (Garden pea)).